A 293-amino-acid chain; its full sequence is Elongation factor Ts (293 aa).

The tract at residues 80 to 83 (TDFV) is involved in Mg(2+) ion dislocation from EF-Tu.

This sequence belongs to the EF-Ts family.

Its subcellular location is the cytoplasm. In terms of biological role, associates with the EF-Tu.GDP complex and induces the exchange of GDP to GTP. It remains bound to the aminoacyl-tRNA.EF-Tu.GTP complex up to the GTP hydrolysis stage on the ribosome. This Burkholderia lata (strain ATCC 17760 / DSM 23089 / LMG 22485 / NCIMB 9086 / R18194 / 383) protein is Elongation factor Ts.